Reading from the N-terminus, the 228-residue chain is Large ribosomal subunit protein uL3 (228 aa).

The segment at cysteine 157–glycine 176 is disordered.

Belongs to the universal ribosomal protein uL3 family. As to quaternary structure, part of the 50S ribosomal subunit. Forms a cluster with proteins L14 and L19.

Functionally, one of the primary rRNA binding proteins, it binds directly near the 3'-end of the 23S rRNA, where it nucleates assembly of the 50S subunit. In Rhodopirellula baltica (strain DSM 10527 / NCIMB 13988 / SH1), this protein is Large ribosomal subunit protein uL3.